A 752-amino-acid chain; its full sequence is MGIKVQRPRCFFDIAINNQPAGRVVFELFSDVCPKTCENFRCLCTGEKGTGKSTQKPLHYKSCLFHRVVKDFMVQGGDFSEGNGRGGESIYGGFFEDESFAVKHNKEFLLSMANRGKDTNGSQFFITTKPTPHLDGHHVVFGQVISGQEVVREIENQKTDAASKPFAEVRILSCGELIPKSKVKKEEKKRHKSSSSSSSSDSDSSSDSQSSSESSDSESASEEKSRKRKKKHRKNSRKHKKEKKKRKKSKKSPSSESEAENVDAQPQSTVRPEEIPPIPENRFLMRKSPPKADDKERKNRERERERECNPPNSQPASYQRRFLVTRSGRKIKGRGPRRYRTPSRSRSRDRFRRSETPPHWRQEMQRAQRMRVSSGERWIKGDKSELNEIKENQRSPVRVKEKKITDHRHMSESPNRKVEKEKKAKDHKSESKERDIRRNSEKDDKYNKNKVKKRGKSKSRSKSKERSKSKERDSKHSRHEDKRVRSRSKERDHETTKEKEKPLDPKGKDQERSRSKENSKQVESKSNEHDHSKSKEKDRRAQSRSRERDLTKSKHSYNSRTRERSRSRDRSRRVRSRSHDRDRSRSKEYHRYREQEYRRRGRSRSRDRRTPGRSRSKDRRRRRRDSRSSEREESQSRNKDKYRSQESKSSHRKENSEGEKRTYSKSRDHNSSSNNREKKADREQSPVSKTKQSSQDNEVKSSTLKNQEDEKTRSPVEKENQKSKGQENDHVHDKNKKCDHESSPGTDEDKSG.

The PPIase cyclophilin-type domain maps to 11–176 (FFDIAINNQP…AEVRILSCGE (166 aa)). Basic residues predominate over residues 182 to 193 (KVKKEEKKRHKS). The tract at residues 182–752 (KVKKEEKKRH…SPGTDEDKSG (571 aa)) is disordered. The segment covering 194–214 (SSSSSSSDSDSSSDSQSSSES) has biased composition (low complexity). The span at 226-251 (RKRKKKHRKNSRKHKKEKKKRKKSKK) shows a compositional bias: basic residues. Phosphoserine occurs at positions 252, 254, 255, 257, and 288. The span at 290 to 308 (PKADDKERKNREREREREC) shows a compositional bias: basic and acidic residues. Phosphoserine is present on Ser-313. Over residues 327-345 (SGRKIKGRGPRRYRTPSRS) the composition is skewed to basic residues. Composition is skewed to basic and acidic residues over residues 346–366 (RSRD…EMQR) and 377–447 (RWIK…DKYN). Ser-354 is modified (phosphoserine). Phosphothreonine is present on Thr-356. Residue Ser-384 is modified to Phosphoserine. Lys-390 is covalently cross-linked (Glycyl lysine isopeptide (Lys-Gly) (interchain with G-Cter in SUMO2)). Residues Ser-395, Ser-411, and Ser-413 each carry the phosphoserine modification. Basic residues predominate over residues 448–461 (KNKVKKRGKSKSRS). 2 stretches are compositionally biased toward basic and acidic residues: residues 462-552 (KSKE…DLTK) and 577-598 (RSHD…QEYR). Residues 599-625 (RRGRSRSRDRRTPGRSRSKDRRRRRRD) are compositionally biased toward basic residues. Residues 626 to 684 (SRSSEREESQSRNKDKYRSQESKSSHRKENSEGEKRTYSKSRDHNSSSNNREKKADREQ) show a composition bias toward basic and acidic residues. Phosphoserine occurs at positions 685 and 688. Residues 685-705 (SPVSKTKQSSQDNEVKSSTLK) are compositionally biased toward polar residues. Lys-691 is covalently cross-linked (Glycyl lysine isopeptide (Lys-Gly) (interchain with G-Cter in SUMO2)). Phosphoserine occurs at positions 694, 742, and 743. Residues 706-752 (NQEDEKTRSPVEKENQKSKGQENDHVHDKNKKCDHESSPGTDEDKSG) are compositionally biased toward basic and acidic residues. Thr-746 bears the Phosphothreonine mark. Phosphoserine is present on Ser-751.

Interacts with CLK1, PNN and with the phosphorylated C-terminal domain of RNA polymerase II.

It is found in the nucleus matrix. The protein resides in the nucleus speckle. It catalyses the reaction [protein]-peptidylproline (omega=180) = [protein]-peptidylproline (omega=0). With respect to regulation, inhibited by cyclosporin A (CsA). PPIase that catalyzes the cis-trans isomerization of proline imidic peptide bonds in oligopeptides and may therefore assist protein folding. May be implicated in the folding, transport, and assembly of proteins. May play an important role in the regulation of pre-mRNA splicing. The protein is Peptidyl-prolyl cis-trans isomerase G (Ppig) of Mus musculus (Mouse).